The primary structure comprises 563 residues: Membrane protein insertase YidC (563 aa).

A helical transmembrane segment spans residues 6–26 (TVLWMIFSFSLLLLWNNWQIH). The tract at residues 36–70 (PAPEAAATQQPKADANGTAASSTASIPSSPAAAPA) is disordered. The segment covering 54–70 (AASSTASIPSSPAAAPA) has biased composition (low complexity). Transmembrane regions (helical) follow at residues 373–393 (WGWT…PLAA), 443–463 (LPMV…LASV), 482–502 (PFFI…KLNP), and 512–532 (VMMI…AGLV).

Belongs to the OXA1/ALB3/YidC family. Type 1 subfamily. Interacts with the Sec translocase complex via SecD. Specifically interacts with transmembrane segments of nascent integral membrane proteins during membrane integration.

Its subcellular location is the cell membrane. Its function is as follows. Required for the insertion and/or proper folding and/or complex formation of integral membrane proteins into the membrane. Involved in integration of membrane proteins that insert both dependently and independently of the Sec translocase complex, as well as at least some lipoproteins. Aids folding of multispanning membrane proteins. In Bordetella bronchiseptica (strain ATCC BAA-588 / NCTC 13252 / RB50) (Alcaligenes bronchisepticus), this protein is Membrane protein insertase YidC.